The following is a 446-amino-acid chain: Probable glycine dehydrogenase (decarboxylating) subunit 1 (446 aa).

This sequence belongs to the GcvP family. N-terminal subunit subfamily. As to quaternary structure, the glycine cleavage system is composed of four proteins: P, T, L and H. In this organism, the P 'protein' is a heterodimer of two subunits.

The catalysed reaction is N(6)-[(R)-lipoyl]-L-lysyl-[glycine-cleavage complex H protein] + glycine + H(+) = N(6)-[(R)-S(8)-aminomethyldihydrolipoyl]-L-lysyl-[glycine-cleavage complex H protein] + CO2. The glycine cleavage system catalyzes the degradation of glycine. The P protein binds the alpha-amino group of glycine through its pyridoxal phosphate cofactor; CO(2) is released and the remaining methylamine moiety is then transferred to the lipoamide cofactor of the H protein. This Xanthobacter autotrophicus (strain ATCC BAA-1158 / Py2) protein is Probable glycine dehydrogenase (decarboxylating) subunit 1.